Consider the following 584-residue polypeptide: Chondroitin proteoglycan 1 (584 aa).

A signal peptide spans M1–A17. An O-linked (Xyl...) (chondroitin sulfate) serine glycan is attached at S50. Chitin-binding type-2 domains follow at residues D58–G115, T211–N268, and V524–Q578. 2 cysteine pairs are disulfide-bonded: C91–C104 and C244–C257. The segment at T267–G295 is disordered. A glycan (N-linked (GlcNAc...) asparagine) is linked at N268. A disulfide bond links C554 and C567.

Expressed in the germline.

In terms of biological role, required for polar body extrusion during cytokinesis in embryo development. Affects cortical granule size. Has roles in meiotic chromosome segregation, osmotic barrier function and polarization in conjunction with cpg-2. Binds chitin. This Caenorhabditis elegans protein is Chondroitin proteoglycan 1 (cpg-1).